The primary structure comprises 395 residues: ATP phosphoribosyltransferase regulatory subunit (395 aa).

The protein belongs to the class-II aminoacyl-tRNA synthetase family. HisZ subfamily. Heteromultimer composed of HisG and HisZ subunits.

The protein localises to the cytoplasm. The protein operates within amino-acid biosynthesis; L-histidine biosynthesis; L-histidine from 5-phospho-alpha-D-ribose 1-diphosphate: step 1/9. Functionally, required for the first step of histidine biosynthesis. May allow the feedback regulation of ATP phosphoribosyltransferase activity by histidine. This chain is ATP phosphoribosyltransferase regulatory subunit, found in Azotobacter vinelandii (strain DJ / ATCC BAA-1303).